The chain runs to 401 residues: Argininosuccinate synthase (401 aa).

9-17 (AYSGGLDTS) serves as a coordination point for ATP. L-citrulline is bound at residue Tyr88. Position 118 (Gly118) interacts with ATP. The L-aspartate site is built by Thr120, Asn124, and Asp125. An L-citrulline-binding site is contributed by Asn124. Positions 128, 177, 186, 262, and 274 each coordinate L-citrulline.

This sequence belongs to the argininosuccinate synthase family. Type 1 subfamily. Homotetramer.

Its subcellular location is the cytoplasm. The catalysed reaction is L-citrulline + L-aspartate + ATP = 2-(N(omega)-L-arginino)succinate + AMP + diphosphate + H(+). It functions in the pathway amino-acid biosynthesis; L-arginine biosynthesis; L-arginine from L-ornithine and carbamoyl phosphate: step 2/3. In Chlorobaculum parvum (strain DSM 263 / NCIMB 8327) (Chlorobium vibrioforme subsp. thiosulfatophilum), this protein is Argininosuccinate synthase.